The chain runs to 366 residues: Phospho-N-acetylmuramoyl-pentapeptide-transferase (366 aa).

10 helical membrane passes run 27 to 47, 71 to 91, 93 to 113, 134 to 154, 174 to 194, 205 to 225, 245 to 265, 268 to 288, 297 to 317, and 343 to 363; these read AALFTSALIVFLFGPAIISSL, TPTMGGLMILAGIVGSALLWA, LSSIYVVSTLLVTLGFGAIGF, LGIEFVIAAIAVFFMMQAAQS, LMLNLGYFFVLFGGFVIVGAG, GLAIVPVMIASAAFGLIAYLA, LAVILGAVIGAGLGFLWFNAP, AIFMGDTGSLALGGLIGTVAV, VIIGGLFVIETLSVIIQVFWF, and QVVIRFWIIAVILAMVGLSTL.

Belongs to the glycosyltransferase 4 family. MraY subfamily. Mg(2+) is required as a cofactor.

It localises to the cell inner membrane. The enzyme catalyses UDP-N-acetyl-alpha-D-muramoyl-L-alanyl-gamma-D-glutamyl-meso-2,6-diaminopimeloyl-D-alanyl-D-alanine + di-trans,octa-cis-undecaprenyl phosphate = di-trans,octa-cis-undecaprenyl diphospho-N-acetyl-alpha-D-muramoyl-L-alanyl-D-glutamyl-meso-2,6-diaminopimeloyl-D-alanyl-D-alanine + UMP. It functions in the pathway cell wall biogenesis; peptidoglycan biosynthesis. Catalyzes the initial step of the lipid cycle reactions in the biosynthesis of the cell wall peptidoglycan: transfers peptidoglycan precursor phospho-MurNAc-pentapeptide from UDP-MurNAc-pentapeptide onto the lipid carrier undecaprenyl phosphate, yielding undecaprenyl-pyrophosphoryl-MurNAc-pentapeptide, known as lipid I. The sequence is that of Phospho-N-acetylmuramoyl-pentapeptide-transferase from Sinorhizobium fredii (strain NBRC 101917 / NGR234).